Here is a 386-residue protein sequence, read N- to C-terminus: Prostatic acid phosphatase (386 aa).

The first 32 residues, methionine 1–alanine 32, serve as a signal peptide directing secretion. Residue arginine 43 coordinates substrate. The active-site Nucleophile is histidine 44. A substrate-binding site is contributed by arginine 47. An N-linked (GlcNAc...) asparagine glycan is attached at asparagine 94. Arginine 111 is a binding site for substrate. 3 cysteine pairs are disulfide-bonded: cysteine 161-cysteine 372, cysteine 215-cysteine 313, and cysteine 347-cysteine 351. Asparagine 220 is a glycosylation site (N-linked (GlcNAc...) asparagine). Histidine 289 contacts substrate. The active-site Proton donor is the aspartate 290. The N-linked (GlcNAc...) asparagine glycan is linked to asparagine 333.

This sequence belongs to the histidine acid phosphatase family. Homodimer; dimer formation is required for phosphatase activity. Post-translationally, N-glycosylated. High mannose content, partially sialylated and fucosylated biantennary complex. Also fucosylated with partially sialylated triantennary complex oligosaccharides. In terms of processing, proteolytically cleaved in seminal fluid to produce several peptides. Peptide PAPf39, the most prominent, forms amyloid beta-sheet fibrils, SEVI (semen-derived enhancer of viral infection). In terms of tissue distribution, highly expressed in the prostate, restricted to glandular and ductal epithelial cells. Also expressed in bladder, kidney, pancreas, lung, cervix, testis and ovary. Weak expression in a subset of pancreatic islet cells, squamous epithelia, the pilosebaceous unit, colonic neuroendocrine cells and skin adnexal structures. Low expression in prostate carcinoma cells and tissues. As to expression, widely expressed. Expressed in the sarcolemma of skeletal muscle.

It is found in the secreted. The protein resides in the cell membrane. It localises to the lysosome membrane. The protein localises to the nucleus. Its subcellular location is the cytoplasm. It is found in the cytosol. The catalysed reaction is a phosphate monoester + H2O = an alcohol + phosphate. The enzyme catalyses 1-(9Z-octadecenoyl)-sn-glycero-3-phosphate + H2O = 1-(9Z-octadecenoyl)-sn-glycerol + phosphate. It carries out the reaction a ribonucleoside 5'-phosphate + H2O = a ribonucleoside + phosphate. It catalyses the reaction O-phospho-L-tyrosyl-[protein] + H2O = L-tyrosyl-[protein] + phosphate. Its activity is regulated as follows. Phosphatase activity inhibited by L(+)-tartrate, and by its derivative, alpha-benzylaminobenzylphosphonic acid. In terms of biological role, a non-specific tyrosine phosphatase that dephosphorylates a diverse number of substrates under acidic conditions (pH 4-6) including alkyl, aryl, and acyl orthophosphate monoesters and phosphorylated proteins. Has lipid phosphatase activity and inactivates lysophosphatidic acid in seminal plasma. Tyrosine phosphatase that acts as a tumor suppressor of prostate cancer through dephosphorylation of ERBB2 and deactivation of MAPK-mediated signaling. In addition to its tyrosine phosphatase activity has ecto-5'-nucleotidase activity in dorsal root ganglion (DRG) neurons. Generates adenosine from AMP which acts as a pain suppressor. Functionally, (Microbial infection) Forms amyloid beta-sheet fibrils in semen. These fibrils, termed SEVI (semen-derived enhancer of viral infection) capture HIV virions, attach them to target cells and enhance infection. SEVI amyloid fibrils are degraded by polyphenol epigallocatechin-3-gallate (EGCG), a constituent of green tea. Target cell attachment and enhancement of HIV infection is inhibited by surfen. Also similarly boosts XMRV (xenotropic murine leukemia virus-related virus) infection. The polypeptide is Prostatic acid phosphatase (Homo sapiens (Human)).